A 625-amino-acid polypeptide reads, in one-letter code: Probable potassium transport system protein Kup (625 aa).

Transmembrane regions (helical) follow at residues 13 to 33, 53 to 73, 103 to 123, 141 to 161, 172 to 192, 206 to 226, 250 to 270, 282 to 302, 340 to 360, 369 to 389, 400 to 420, and 422 to 442; these read TALAALGVVFGDIGTSPLYAL, ILSIIFWCLMLIISIKYVAIV, IYMIAIGFIGASLFFGDGIIT, VFDPFIMPIAIAIIVTLFLVQ, FGPITLVWFLSLGILGIHSVI, AIQFIYHHPIMTFFVMGAVVL, WFFVVLPCLVLNYAGQGALLL, LLVPQWALYPMIIMATMATVI, IYVPFLNWLLLIAIIILILIF, AYGLAVTLTMLCDTILVAVFI, VLLLIIPFFILESVLVGATSL, and ILSGGWVPLLIGAIAVTILMT.

It belongs to the HAK/KUP transporter (TC 2.A.72) family.

The protein resides in the cell inner membrane. The enzyme catalyses K(+)(in) + H(+)(in) = K(+)(out) + H(+)(out). Its function is as follows. Transport of potassium into the cell. Likely operates as a K(+):H(+) symporter. In Acinetobacter baumannii (strain ACICU), this protein is Probable potassium transport system protein Kup.